Consider the following 284-residue polypeptide: Four and a half LIM domains protein 5 (284 aa).

Residues 8 to 32 (CQYCMASLLGKKYVLKDDNPYCVSC) form a C4-type zinc finger. LIM zinc-binding domains lie at 39 to 100 (NYCE…ECSS), 101 to 160 (KCFH…KEFA), 161 to 220 (HYCS…LYAK), and 223 to 283 (AACT…VDTD).

In terms of assembly, interacts with CREM (via the third LIM domain). Interacts (via second LIM domain) with SPAG8.

Its subcellular location is the nucleus. Functionally, may be involved in the regulation of spermatogenesis. Stimulates CREM transcriptional activity in a phosphorylation-independent manner. This is Four and a half LIM domains protein 5 (FHL5) from Bos taurus (Bovine).